A 396-amino-acid chain; its full sequence is Elongation factor Tu (396 aa).

One can recognise a tr-type G domain in the interval 10 to 205; it reads KPHVNIGTIG…ACDESIPDPE (196 aa). The segment at 19-26 is G1; it reads GHVDHGKT. 19 to 26 serves as a coordination point for GTP; it reads GHVDHGKT. Residue threonine 26 coordinates Mg(2+). The segment at 62–66 is G2; sequence GITIN. The tract at residues 83–86 is G3; the sequence is DAPG. Residues 83–87 and 138–141 each bind GTP; these read DAPGH and NKCD. The interval 138 to 141 is G4; the sequence is NKCD. Positions 175–177 are G5; the sequence is SAL.

Belongs to the TRAFAC class translation factor GTPase superfamily. Classic translation factor GTPase family. EF-Tu/EF-1A subfamily. As to quaternary structure, monomer.

It localises to the cytoplasm. It catalyses the reaction GTP + H2O = GDP + phosphate + H(+). Its function is as follows. GTP hydrolase that promotes the GTP-dependent binding of aminoacyl-tRNA to the A-site of ribosomes during protein biosynthesis. The sequence is that of Elongation factor Tu from Corynebacterium jeikeium (strain K411).